The primary structure comprises 122 residues: Ribosome-binding factor A (122 aa).

Belongs to the RbfA family. In terms of assembly, monomer. Binds 30S ribosomal subunits, but not 50S ribosomal subunits or 70S ribosomes.

It is found in the cytoplasm. In terms of biological role, one of several proteins that assist in the late maturation steps of the functional core of the 30S ribosomal subunit. Associates with free 30S ribosomal subunits (but not with 30S subunits that are part of 70S ribosomes or polysomes). Required for efficient processing of 16S rRNA. May interact with the 5'-terminal helix region of 16S rRNA. The polypeptide is Ribosome-binding factor A (Prosthecochloris aestuarii (strain DSM 271 / SK 413)).